The primary structure comprises 479 residues: Proline--tRNA ligase 2 (479 aa).

It belongs to the class-II aminoacyl-tRNA synthetase family. ProS type 3 subfamily. In terms of assembly, homodimer.

The protein resides in the cytoplasm. It carries out the reaction tRNA(Pro) + L-proline + ATP = L-prolyl-tRNA(Pro) + AMP + diphosphate. In terms of biological role, catalyzes the attachment of proline to tRNA(Pro) in a two-step reaction: proline is first activated by ATP to form Pro-AMP and then transferred to the acceptor end of tRNA(Pro). The sequence is that of Proline--tRNA ligase 2 from Rhodococcus jostii (strain RHA1).